Reading from the N-terminus, the 308-residue chain is NADH-cytochrome b5 reductase 1 (308 aa).

The helical transmembrane segment at 29-49 (VASSPAFLVAAAAIVIAAAFY) threads the bilayer. The region spanning 64–167 (SIWKEFPLQK…KGPKGNFKYT (104 aa)) is the FAD-binding FR-type domain. FAD-binding positions include 147 to 162 (ASLKIGDTLRVKGPKG) and 173 to 205 (HLGMIAGGTGLAPMIQIVRAILQNPPDRTNITL).

It belongs to the flavoprotein pyridine nucleotide cytochrome reductase family. As to quaternary structure, monomer. Component of the 2-(3-amino-3-carboxypropyl)histidine synthase complex composed of DPH1, DPH2, DPH3 and a NADH-dependent reductase, predominantly MCR1.1. It depends on FAD as a cofactor.

It localises to the mitochondrion outer membrane. It carries out the reaction 2 Fe(III)-[cytochrome b5] + NADH = 2 Fe(II)-[cytochrome b5] + NAD(+) + H(+). It catalyses the reaction 2 Fe(3+)-[Dph3] + NADH = 2 Fe(2+)-[Dph3] + NAD(+) + H(+). The protein operates within protein modification; peptidyl-diphthamide biosynthesis. Its function is as follows. NADH-dependent reductase for DPH3 and cytochrome b5. Required for the first step of diphthamide biosynthesis, a post-translational modification of histidine which occurs in elongation factor 2. DPH1 and DPH2 transfer a 3-amino-3-carboxypropyl (ACP) group from S-adenosyl-L-methionine (SAM) to a histidine residue, the reaction is assisted by a reduction system comprising DPH3 and a NADH-dependent reductase, predominantly MCR1.1. By reducing DPH3, also involved in the formation of the tRNA wobble base modification mcm5s 2U (5-methoxycarbonylmethyl-2-thiouridine), mediated by the elongator complex. The cytochrome b5/NADH cytochrome b5 reductase electron transfer system supports the catalytic activity of several sterol biosynthetic enzymes. This Laccaria bicolor (strain S238N-H82 / ATCC MYA-4686) (Bicoloured deceiver) protein is NADH-cytochrome b5 reductase 1 (MCR1.1).